The primary structure comprises 273 residues: 4-hydroxy-tetrahydrodipicolinate reductase (273 aa).

Residues 12–17 (GAGGRM) and glutamate 38 each bind NAD(+). Residue arginine 39 coordinates NADP(+). NAD(+) is bound by residues 102 to 104 (GTT) and 126 to 129 (AANF). Histidine 159 functions as the Proton donor/acceptor in the catalytic mechanism. Histidine 160 contributes to the (S)-2,3,4,5-tetrahydrodipicolinate binding site. Lysine 163 acts as the Proton donor in catalysis. 169–170 (GT) provides a ligand contact to (S)-2,3,4,5-tetrahydrodipicolinate.

It belongs to the DapB family. As to quaternary structure, homotetramer.

The protein localises to the cytoplasm. The catalysed reaction is (S)-2,3,4,5-tetrahydrodipicolinate + NAD(+) + H2O = (2S,4S)-4-hydroxy-2,3,4,5-tetrahydrodipicolinate + NADH + H(+). It carries out the reaction (S)-2,3,4,5-tetrahydrodipicolinate + NADP(+) + H2O = (2S,4S)-4-hydroxy-2,3,4,5-tetrahydrodipicolinate + NADPH + H(+). The protein operates within amino-acid biosynthesis; L-lysine biosynthesis via DAP pathway; (S)-tetrahydrodipicolinate from L-aspartate: step 4/4. Functionally, catalyzes the conversion of 4-hydroxy-tetrahydrodipicolinate (HTPA) to tetrahydrodipicolinate. The protein is 4-hydroxy-tetrahydrodipicolinate reductase of Salmonella arizonae (strain ATCC BAA-731 / CDC346-86 / RSK2980).